Consider the following 448-residue polypeptide: Homogentisate 1,2-dioxygenase (448 aa).

The Proton acceptor role is filled by His-303. His-346 and Glu-352 together coordinate Fe cation. Homogentisate is bound by residues Tyr-361 and His-382. His-382 lines the Fe cation pocket.

This sequence belongs to the homogentisate dioxygenase family. Hexamer; dimer of trimers. Fe cation is required as a cofactor.

The catalysed reaction is homogentisate + O2 = 4-maleylacetoacetate + H(+). Its pathway is amino-acid degradation; L-phenylalanine degradation; acetoacetate and fumarate from L-phenylalanine: step 4/6. Involved in the catabolism of homogentisate (2,5-dihydroxyphenylacetate or 2,5-OH-PhAc), a central intermediate in the degradation of phenylalanine and tyrosine. Catalyzes the oxidative ring cleavage of the aromatic ring of homogentisate to yield maleylacetoacetate. In Rhodopseudomonas palustris (strain TIE-1), this protein is Homogentisate 1,2-dioxygenase.